A 148-amino-acid chain; its full sequence is 3-dehydroquinate dehydratase (148 aa).

The Proton acceptor role is filled by Tyr-23. Residues Asn-75, His-81, and Asp-88 each contribute to the substrate site. The active-site Proton donor is His-101. Residues 102–103 and Arg-112 each bind substrate; that span reads LS.

It belongs to the type-II 3-dehydroquinase family. Homododecamer.

It catalyses the reaction 3-dehydroquinate = 3-dehydroshikimate + H2O. It participates in metabolic intermediate biosynthesis; chorismate biosynthesis; chorismate from D-erythrose 4-phosphate and phosphoenolpyruvate: step 3/7. In terms of biological role, catalyzes a trans-dehydration via an enolate intermediate. The protein is 3-dehydroquinate dehydratase of Xanthomonas campestris pv. campestris (strain 8004).